We begin with the raw amino-acid sequence, 456 residues long: tRNA-2-methylthio-N(6)-dimethylallyladenosine synthase (456 aa).

The MTTase N-terminal domain occupies 18–136; it reads EFFFIQTFGC…FPEYLHRVQV (119 aa). The [4Fe-4S] cluster site is built by Cys27, Cys63, Cys97, Cys173, Cys177, and Cys180. Residues 159–391 form the Radical SAM core domain; sequence RKSNVKAFVT…AVNEGIVVGN (233 aa). Positions 392-455 constitute a TRAM domain; the sequence is KAAEGKIYEV…SFSLVGEVVE (64 aa).

The protein belongs to the methylthiotransferase family. MiaB subfamily. As to quaternary structure, monomer. [4Fe-4S] cluster serves as cofactor.

It localises to the cytoplasm. It catalyses the reaction N(6)-dimethylallyladenosine(37) in tRNA + (sulfur carrier)-SH + AH2 + 2 S-adenosyl-L-methionine = 2-methylsulfanyl-N(6)-dimethylallyladenosine(37) in tRNA + (sulfur carrier)-H + 5'-deoxyadenosine + L-methionine + A + S-adenosyl-L-homocysteine + 2 H(+). Its function is as follows. Catalyzes the methylthiolation of N6-(dimethylallyl)adenosine (i(6)A), leading to the formation of 2-methylthio-N6-(dimethylallyl)adenosine (ms(2)i(6)A) at position 37 in tRNAs that read codons beginning with uridine. This Clostridium botulinum (strain Alaska E43 / Type E3) protein is tRNA-2-methylthio-N(6)-dimethylallyladenosine synthase.